The chain runs to 131 residues: D-ribose pyranase (131 aa).

The active-site Proton donor is His-20. Substrate-binding positions include Asp-28, His-98, and 120-122 (FSN).

Belongs to the RbsD / FucU family. RbsD subfamily. As to quaternary structure, homodecamer.

The protein localises to the cytoplasm. The catalysed reaction is beta-D-ribopyranose = beta-D-ribofuranose. It functions in the pathway carbohydrate metabolism; D-ribose degradation; D-ribose 5-phosphate from beta-D-ribopyranose: step 1/2. In terms of biological role, catalyzes the interconversion of beta-pyran and beta-furan forms of D-ribose. This is D-ribose pyranase from Lactobacillus acidophilus (strain ATCC 700396 / NCK56 / N2 / NCFM).